We begin with the raw amino-acid sequence, 258 residues long: Pimeloyl-[acyl-carrier protein] methyl ester esterase (258 aa).

Residues tryptophan 22, 84–85 (SL), and 145–149 (FLAIQ) contribute to the substrate site. The active-site Nucleophile is the serine 84. Residues aspartate 209 and histidine 238 contribute to the active site. Histidine 238 lines the substrate pocket.

Belongs to the AB hydrolase superfamily. Carboxylesterase BioH family. As to quaternary structure, monomer.

Its subcellular location is the cytoplasm. The catalysed reaction is 6-carboxyhexanoyl-[ACP] methyl ester + H2O = 6-carboxyhexanoyl-[ACP] + methanol + H(+). It functions in the pathway cofactor biosynthesis; biotin biosynthesis. Functionally, the physiological role of BioH is to remove the methyl group introduced by BioC when the pimeloyl moiety is complete. It allows to synthesize pimeloyl-ACP via the fatty acid synthetic pathway through the hydrolysis of the ester bonds of pimeloyl-ACP esters. This Pseudoalteromonas atlantica (strain T6c / ATCC BAA-1087) protein is Pimeloyl-[acyl-carrier protein] methyl ester esterase.